We begin with the raw amino-acid sequence, 942 residues long: MEQKPSPPPPPRSDEEEDGLMGCGMGGTGDIAGGDLDLMEEFLLATPGFDLSEFWHPGAASPFSPLFDIGSSVTTLTTPAPAAGEDDRDEAEMPSRGGGGLEVSPAHRGWTFQTAPQEVAVEPTVKERLRRALERIASQSQSQAQRGDGELLVQVWVPTRIGDRQVLTTCGQPFWLDRRNQRLANYRTVSMKYQFSADESARADLGLPGRVFVGRVPEWTPDVRYFSTEEYPRVQHAQYFDIRGSVALPVFEPRSRACLGVVELVMTTQKVNYSAEIENICNALKEVDLRSSDVSSDPRSKVVDASYRAIIPEIMDVLRAVCDTHNLPLAQTWIPCICQAKRGSRHSDESYKHCVSTVDEACYVRDCSVLGFHQACSEHHLFRGEGVVGRAFGTNEPCFSPDITTYSKTQYPLSHHAKLFGLRAAVAIQLRSVKTGSLDFVLEFFLPMKCINTEEQRAMLNSLSNTIQQVCYTLRVVKPKELVNDGPFEISQPTRPEFYAKSVHEDLDELCSGINVPGRTTSLEASEEVSSWIASLVDAQNKGGKGEIDVDLPFGFSKQDDEGFSVTAGWHTSPVMAPDGSMFSGFKRHEDYDVKENTCSSDPSNSNSDKAVEKRRTKTEKTVSLQDLRKHFAGSLKEAAKNLGVCPTTLKRICRQHGINRWPSRKIKKVGHSLKKLQMVIDSVHGPEGTVQLSSLYENFTKTTWSERELQGDVHFPASEQNFQLEPSVPDRPCEGRFTSHTSGSNSISPSCSQSSNSSLGCSSVPKTQQQHGSAPQLAVKEEISMDENQCSTLIKSASHAEAELQMFVEERPTMLFRSQSQVLLSEHKPIENMSNVQKARSDSLKIKAIYGEERCIFRLQPSWGFQRLKEEIVKRFGISQDTHVDLKYLDDESEWVLLTCDADLLECIDVYKSSSNQTVRILVNPSIQPLLNASFGQTGLS.

The segment covering 1–11 (MEQKPSPPPPP) has biased composition (pro residues). Disordered stretches follow at residues 1-32 (MEQK…GDIA), 77-106 (TTPA…VSPA), 594-620 (VKEN…TKTE), 723-753 (FQLE…PSCS), and 759-778 (SLGC…APQL). Gly residues predominate over residues 21–32 (MGCGMGGTGDIA). Positions 597–609 (NTCSSDPSNSNSD) are enriched in polar residues. In terms of domain architecture, RWP-RK spans 609 to 690 (DKAVEKRRTK…IDSVHGPEGT (82 aa)). The segment covering 743–753 (SGSNSISPSCS) has biased composition (low complexity). Positions 765–774 (VPKTQQQHGS) are enriched in polar residues. The region spanning 844 to 927 (SLKIKAIYGE…QTVRILVNPS (84 aa)) is the PB1 domain.

Its subcellular location is the nucleus. Its function is as follows. Probable transcription factor. This chain is Protein NLP1 (NLP1), found in Oryza sativa subsp. japonica (Rice).